We begin with the raw amino-acid sequence, 533 residues long: MNTSPDRVIIFDTTLRDGEQSPGAALNVDEKLTIARALARLGVDVIEAGFPHASPGDFEAVQKIAGSVGSEADSPIICGLARATQKDIKSAADALRPAAKPRIHTFLATSDIHLQYKLKKTRQEVLEIVPEMVAYAKSFLNDVEFSPEDAGRSDPEFLYQVLERAIAAGATTVNIPDTVGYTTPSEFGALIRGIKENVPNIDQAIISVHGHDDLGLAVANFLEAVKNGARQLECTINGIGERAGNASLEELVMALHVRRSYFNPFLGRPAESTEPLTKINTKEIYRTSRLVSNLTGMIVQPNKAIVGANAFAHESGIHQDGVLKHKLTYEIMDAESIGLTNNQIVLGKLSGRNAFRSRLQELGFELSETELNNAFIQFKEMADRKKEITDRDLEAIVNDEIDTVPDHFRLELVQVSCGNNARPTATVTIRTPDGSELSDAAIGTGPVDALCKAIDRVVQIPNELISFSVREVTEGIDALGEVTIRLRYAGRTYSARAADTDIIVASARAYVSALNRLHVALQQKEKTPEMLQV.

A Pyruvate carboxyltransferase domain is found at 8-270; sequence VIIFDTTLRD…YFNPFLGRPA (263 aa). Mn(2+) is bound by residues Asp-17, His-209, His-211, and Asn-245. The regulatory domain stretch occupies residues 409–533; that stretch reads RLELVQVSCG…KEKTPEMLQV (125 aa).

This sequence belongs to the alpha-IPM synthase/homocitrate synthase family. LeuA type 1 subfamily. As to quaternary structure, homodimer. It depends on Mn(2+) as a cofactor.

Its subcellular location is the cytoplasm. The enzyme catalyses 3-methyl-2-oxobutanoate + acetyl-CoA + H2O = (2S)-2-isopropylmalate + CoA + H(+). It participates in amino-acid biosynthesis; L-leucine biosynthesis; L-leucine from 3-methyl-2-oxobutanoate: step 1/4. Functionally, catalyzes the condensation of the acetyl group of acetyl-CoA with 3-methyl-2-oxobutanoate (2-ketoisovalerate) to form 3-carboxy-3-hydroxy-4-methylpentanoate (2-isopropylmalate). The polypeptide is 2-isopropylmalate synthase (Microcystis aeruginosa).